A 96-amino-acid polypeptide reads, in one-letter code: MLRLDLQFFASKKGVGSTKNGRDSQSKRLGAKRADGQTVSGGSILYRQRGTKIYPGVNVGRGGDDTLYAKVDGVVRFERLGRDRKQVSVYPVAQEA.

Residues 1 to 9 (MLRLDLQFF) constitute a propeptide that is removed on maturation. Positions 14–36 (GVGSTKNGRDSQSKRLGAKRADG) are disordered.

This sequence belongs to the bacterial ribosomal protein bL27 family. Post-translationally, the N-terminus is cleaved by ribosomal processing cysteine protease Prp.

This is Large ribosomal subunit protein bL27 from Bacillus anthracis (strain A0248).